The sequence spans 600 residues: NADH-quinone oxidoreductase subunit C/D (600 aa).

Residues 1 to 190 form an NADH dehydrogenase I subunit C region; it reads MVNNMTDLTA…DPFELTKAKQ (190 aa). The NADH dehydrogenase I subunit D stretch occupies residues 214–600; it reads DFMFLNLGPN…IDFVMSDVDR (387 aa).

The protein in the N-terminal section; belongs to the complex I 30 kDa subunit family. In the C-terminal section; belongs to the complex I 49 kDa subunit family. In terms of assembly, NDH-1 is composed of 13 different subunits. Subunits NuoB, CD, E, F, and G constitute the peripheral sector of the complex.

The protein localises to the cell inner membrane. It carries out the reaction a quinone + NADH + 5 H(+)(in) = a quinol + NAD(+) + 4 H(+)(out). NDH-1 shuttles electrons from NADH, via FMN and iron-sulfur (Fe-S) centers, to quinones in the respiratory chain. The immediate electron acceptor for the enzyme in this species is believed to be ubiquinone. Couples the redox reaction to proton translocation (for every two electrons transferred, four hydrogen ions are translocated across the cytoplasmic membrane), and thus conserves the redox energy in a proton gradient. The polypeptide is NADH-quinone oxidoreductase subunit C/D (Salmonella arizonae (strain ATCC BAA-731 / CDC346-86 / RSK2980)).